The following is a 238-amino-acid chain: Pyridoxine 5'-phosphate synthase (238 aa).

Asparagine 7 and arginine 18 together coordinate 3-amino-2-oxopropyl phosphate. The Proton acceptor role is filled by histidine 43. The 1-deoxy-D-xylulose 5-phosphate site is built by arginine 45 and histidine 50. The active-site Proton acceptor is glutamate 70. Threonine 100 lines the 1-deoxy-D-xylulose 5-phosphate pocket. Histidine 190 functions as the Proton donor in the catalytic mechanism. Residues aspartate 191 and 213–214 (GH) contribute to the 3-amino-2-oxopropyl phosphate site.

The protein belongs to the PNP synthase family. In terms of assembly, homooctamer; tetramer of dimers.

It is found in the cytoplasm. The catalysed reaction is 3-amino-2-oxopropyl phosphate + 1-deoxy-D-xylulose 5-phosphate = pyridoxine 5'-phosphate + phosphate + 2 H2O + H(+). Its pathway is cofactor biosynthesis; pyridoxine 5'-phosphate biosynthesis; pyridoxine 5'-phosphate from D-erythrose 4-phosphate: step 5/5. Its function is as follows. Catalyzes the complicated ring closure reaction between the two acyclic compounds 1-deoxy-D-xylulose-5-phosphate (DXP) and 3-amino-2-oxopropyl phosphate (1-amino-acetone-3-phosphate or AAP) to form pyridoxine 5'-phosphate (PNP) and inorganic phosphate. The polypeptide is Pyridoxine 5'-phosphate synthase (Porphyromonas gingivalis (strain ATCC 33277 / DSM 20709 / CIP 103683 / JCM 12257 / NCTC 11834 / 2561)).